The primary structure comprises 134 residues: Flagellar basal-body rod protein FlgC (134 aa).

The protein belongs to the flagella basal body rod proteins family. As to quaternary structure, the basal body constitutes a major portion of the flagellar organelle and consists of four rings (L,P,S, and M) mounted on a central rod. The rod consists of about 26 subunits of FlgG in the distal portion, and FlgB, FlgC and FlgF are thought to build up the proximal portion of the rod with about 6 subunits each.

The protein localises to the bacterial flagellum basal body. The chain is Flagellar basal-body rod protein FlgC (flgC) from Salmonella typhi.